Here is a 349-residue protein sequence, read N- to C-terminus: Glycerol-3-phosphate dehydrogenase [NAD(+)], cytoplasmic (349 aa).

NAD(+) contacts are provided by residues 10–15 (GSGDWG), lysine 120, and alanine 153. Position 120 (lysine 120) interacts with substrate. Serine 154 bears the Phosphoserine mark. The active-site Proton acceptor is lysine 204. Arginine 269 is an NAD(+) binding site. 269-270 (RN) lines the substrate pocket. Lysine 289 bears the N6-succinyllysine mark. Residues lysine 296 and glutamine 298 each contribute to the NAD(+) site. Tyrosine 326 carries the phosphotyrosine modification.

It belongs to the NAD-dependent glycerol-3-phosphate dehydrogenase family. In terms of assembly, homodimer.

It is found in the cytoplasm. It catalyses the reaction sn-glycerol 3-phosphate + NAD(+) = dihydroxyacetone phosphate + NADH + H(+). Its function is as follows. Has glycerol-3-phosphate dehydrogenase activity. The protein is Glycerol-3-phosphate dehydrogenase [NAD(+)], cytoplasmic (GPD1) of Oryctolagus cuniculus (Rabbit).